The primary structure comprises 171 residues: Co-chaperone protein HscB (171 aa).

The J domain occupies 2 to 74; the sequence is DYFTLFGLPA…LTRAEYLLSL (73 aa).

It belongs to the HscB family. In terms of assembly, interacts with HscA and stimulates its ATPase activity. Interacts with IscU.

Co-chaperone involved in the maturation of iron-sulfur cluster-containing proteins. Seems to help targeting proteins to be folded toward HscA. In Klebsiella pneumoniae subsp. pneumoniae (strain ATCC 700721 / MGH 78578), this protein is Co-chaperone protein HscB.